Here is a 623-residue protein sequence, read N- to C-terminus: DELLA protein RHT-1 (623 aa).

Residues 1–27 (MKREYQDAGGSGGGGGGMGSSEDKMMV) are disordered. The span at 9–19 (GGSGGGGGGMG) shows a compositional bias: gly residues. Residues 38–42 (DELLA) carry the DELLA motif motif. Disordered stretches follow at residues 109–138 (LNAP…GYFD) and 159–201 (AGAT…GARS). The span at 111–120 (APPPPLPPAP) shows a compositional bias: pro residues. Low complexity-rich tracts occupy residues 121 to 131 (QLNASTSSTVT) and 181 to 201 (GGSS…GARS). A GRAS domain is found at 225 to 619 (VDTQEAGIRL…RPLIATSAWR (395 aa)). Residues 232-288 (IRLVHALLACAEAVQQENLSAAEALVKQIPLLAASQGGAMRKVAAYFGEALARRVFR) are leucine repeat I (LRI). The LxCxE motif signature appears at 239–243 (LACAE). The interval 307–372 (HAHFYESCPY…GGPPSFRLTG (66 aa)) is VHIID. The VHIID signature appears at 338 to 342 (VHVVD). The segment at 386-425 (QVGWKLAQFAHTIRVDFQYRGLVAATLADLEPFMLQPEGE) is leucine repeat II (LRII). Residues 435-540 (IAVNSVFEMH…EVYLGRQICN (106 aa)) form a PFYRE region. Residues 543-619 (ACEGAERTER…RPLIATSAWR (77 aa)) form an SAW region.

This sequence belongs to the GRAS family. DELLA subfamily. In terms of processing, phosphorylated. Ubiquitinated. Upon GA application it is ubiquitinated, leading to its subsequent degradation.

It is found in the nucleus. In terms of biological role, probable transcriptional regulator that acts as a repressor of the gibberellin (GA) signaling pathway. Probably acts by participating in large multiprotein complexes that repress transcription of GA-inducible genes. Upon GA application, it is degraded by the proteasome, allowing the GA signaling pathway. This is DELLA protein RHT-1 (RHT1) from Triticum aestivum (Wheat).